A 99-amino-acid polypeptide reads, in one-letter code: Aspartyl/glutamyl-tRNA(Asn/Gln) amidotransferase subunit C (99 aa).

It belongs to the GatC family. As to quaternary structure, heterotrimer of A, B and C subunits.

It catalyses the reaction L-glutamyl-tRNA(Gln) + L-glutamine + ATP + H2O = L-glutaminyl-tRNA(Gln) + L-glutamate + ADP + phosphate + H(+). The enzyme catalyses L-aspartyl-tRNA(Asn) + L-glutamine + ATP + H2O = L-asparaginyl-tRNA(Asn) + L-glutamate + ADP + phosphate + 2 H(+). Its function is as follows. Allows the formation of correctly charged Asn-tRNA(Asn) or Gln-tRNA(Gln) through the transamidation of misacylated Asp-tRNA(Asn) or Glu-tRNA(Gln) in organisms which lack either or both of asparaginyl-tRNA or glutaminyl-tRNA synthetases. The reaction takes place in the presence of glutamine and ATP through an activated phospho-Asp-tRNA(Asn) or phospho-Glu-tRNA(Gln). The protein is Aspartyl/glutamyl-tRNA(Asn/Gln) amidotransferase subunit C of Methylibium petroleiphilum (strain ATCC BAA-1232 / LMG 22953 / PM1).